A 247-amino-acid chain; its full sequence is ATP synthase subunit C lysine N-methyltransferase (247 aa).

Met-1 carries the post-translational modification N-acetylmethionine. The span at 1-12 shows a compositional bias: basic and acidic residues; the sequence is MERVGTPEEERQ. Residues 1–25 are disordered; the sequence is MERVGTPEEERQAGPVLPTSLESDS. A helical membrane pass occupies residues 34–54; that stretch reads LITGVVGGALLTVYAVATPFI. Positions 51–85 are required for mitochondrial location; that stretch reads TPFITPALRKVCLPFVPATSKQVENVVRMLRHRRG. Positions 209-247 are disordered; that stretch reads QRGRGGRPNQEWVGQKNLSETAGLQASSSETRSKLLDVE. A compositionally biased stretch (polar residues) spans 224–238; that stretch reads KNLSETAGLQASSSE.

This sequence belongs to the ANT/ATPSC lysine N-methyltransferase family. As to expression, ubiquitously expressed.

The protein resides in the mitochondrion membrane. The catalysed reaction is L-lysyl-[protein] + 3 S-adenosyl-L-methionine = N(6),N(6),N(6)-trimethyl-L-lysyl-[protein] + 3 S-adenosyl-L-homocysteine + 3 H(+). Functionally, mitochondrial protein-lysine N-methyltransferase that trimethylates ATP synthase subunit C, ATP5MC1 and ATP5MC2. Trimethylation is required for proper incorporation of the C subunit into the ATP synthase complex and mitochondrial respiration. Promotes chronic pain. Involved in persistent inflammatory and neuropathic pain: methyltransferase activity in the mitochondria of sensory neurons promotes chronic pain via a pathway that depends on the production of reactive oxygen species (ROS) and on the engagement of spinal cord microglia. This chain is ATP synthase subunit C lysine N-methyltransferase, found in Mus musculus (Mouse).